We begin with the raw amino-acid sequence, 445 residues long: Methionine aminopeptidase 2-1 (445 aa).

The interval 1-86 (MAAQASEDLQ…VQSEPPRVPL (86 aa)) is disordered. Residues 34–46 (GEAEDDSDDDADE) show a composition bias toward acidic residues. A compositionally biased stretch (basic residues) spans 59 to 74 (AKKKKKRKSKKKKKGG). H198 is a binding site for substrate. Residues D218, D229, and H298 each coordinate a divalent metal cation. Substrate is bound at residue H306. Residues E331 and E426 each coordinate a divalent metal cation.

This sequence belongs to the peptidase M24A family. Methionine aminopeptidase eukaryotic type 2 subfamily. Co(2+) is required as a cofactor. The cofactor is Zn(2+). Mn(2+) serves as cofactor. Requires Fe(2+) as cofactor.

It localises to the cytoplasm. The catalysed reaction is Release of N-terminal amino acids, preferentially methionine, from peptides and arylamides.. In terms of biological role, cotranslationally removes the N-terminal methionine from nascent proteins. The N-terminal methionine is often cleaved when the second residue in the primary sequence is small and uncharged (Met-Ala-, Cys, Gly, Pro, Ser, Thr, or Val). The protein is Methionine aminopeptidase 2-1 of Aspergillus flavus (strain ATCC 200026 / FGSC A1120 / IAM 13836 / NRRL 3357 / JCM 12722 / SRRC 167).